Reading from the N-terminus, the 258-residue chain is MILDEIISKTKINLENIKENLPLCRLENALTNSYIPRDVKQVLKQKNSINIIAEIKKASPSKGVIKEDFDPLKIAFEYEKAGVSAFSILTEPFYFQGSLEYIALVRRYTNTPILRKDFIVDIYQIAEARLYGADFILLIAKALDKFYLKTLFEYAKSLNLEVLMEIHDETDLEKALFVDADIIGINHRNLQTFDMDMELCIKLIPLIPSGKIIVAESGLYNNSELINLKKQGADAFLIGEHFMRQESIYNAVKDMKGE.

The protein belongs to the TrpC family.

It catalyses the reaction 1-(2-carboxyphenylamino)-1-deoxy-D-ribulose 5-phosphate + H(+) = (1S,2R)-1-C-(indol-3-yl)glycerol 3-phosphate + CO2 + H2O. It participates in amino-acid biosynthesis; L-tryptophan biosynthesis; L-tryptophan from chorismate: step 4/5. This is Indole-3-glycerol phosphate synthase from Campylobacter fetus subsp. fetus (strain 82-40).